Here is a 293-residue protein sequence, read N- to C-terminus: Bifunctional protein FolD (293 aa).

NADP(+)-binding positions include 164–166, S193, and T234; that span reads GRS.

This sequence belongs to the tetrahydrofolate dehydrogenase/cyclohydrolase family. As to quaternary structure, homodimer.

It catalyses the reaction (6R)-5,10-methylene-5,6,7,8-tetrahydrofolate + NADP(+) = (6R)-5,10-methenyltetrahydrofolate + NADPH. The enzyme catalyses (6R)-5,10-methenyltetrahydrofolate + H2O = (6R)-10-formyltetrahydrofolate + H(+). Its pathway is one-carbon metabolism; tetrahydrofolate interconversion. Functionally, catalyzes the oxidation of 5,10-methylenetetrahydrofolate to 5,10-methenyltetrahydrofolate and then the hydrolysis of 5,10-methenyltetrahydrofolate to 10-formyltetrahydrofolate. The protein is Bifunctional protein FolD of Phocaeicola vulgatus (strain ATCC 8482 / DSM 1447 / JCM 5826 / CCUG 4940 / NBRC 14291 / NCTC 11154) (Bacteroides vulgatus).